A 213-amino-acid polypeptide reads, in one-letter code: MMKFLLIAAVAFVAVSADPIHYDKITEEINKAIDDAIAAIEQSETIDPMKVPDHADKFERHVGIVDFKGELAMRNIEARGLKQMKRQGDANVKGEEGIVKAHLLIGVHDDIVSMEYDLAYKLGDLHPTTHVISDIQDFVVALSLEISDEGNITMTSFEVRQFANVVNHIGGLSILDPIFGVLSDVLTAIFQDTVRKEMTKVLAPAFKRELEKN.

An N-terminal signal peptide occupies residues 1 to 17 (MMKFLLIAAVAFVAVSA). N-linked (GlcNAc...) asparagine glycosylation occurs at N151.

It belongs to the mite group 7 allergen family.

The protein localises to the secreted. The chain is Mite allergen Der f 7 (DERF7) from Dermatophagoides farinae (American house dust mite).